The following is a 539-amino-acid chain: GMP synthase [glutamine-hydrolyzing] (539 aa).

Positions Lys-4–Asp-202 constitute a Glutamine amidotransferase type-1 domain. Residue Cys-81 is the Nucleophile of the active site. Residues His-176 and Glu-178 contribute to the active site. The GMPS ATP-PPase domain maps to Trp-203–Arg-395. Ser-230–Ser-236 contacts ATP.

As to quaternary structure, homodimer.

The catalysed reaction is XMP + L-glutamine + ATP + H2O = GMP + L-glutamate + AMP + diphosphate + 2 H(+). The protein operates within purine metabolism; GMP biosynthesis; GMP from XMP (L-Gln route): step 1/1. Catalyzes the synthesis of GMP from XMP. This chain is GMP synthase [glutamine-hydrolyzing], found in Ralstonia pickettii (strain 12J).